A 70-amino-acid polypeptide reads, in one-letter code: MASIKHFFLVFICVSVLLTSGLADYKFHVCDPSFDEKDCDFECKEFGHPGGYCRPDRVQPRIRMCYCTDR.

Positions 1–23 are cleaved as a signal peptide; it reads MASIKHFFLVFICVSVLLTSGLA. Cystine bridges form between Cys30–Cys53, Cys39–Cys65, and Cys43–Cys67.

It belongs to the DEFL family.

Its subcellular location is the secreted. This Arabidopsis thaliana (Mouse-ear cress) protein is Putative defensin-like protein 280.